The sequence spans 393 residues: Xylose transport system permease protein XylH (393 aa).

Residues 1–24 (MSKSNPSEVKLAVPTSGGFSGLKS) lie on the Periplasmic side of the membrane. Residues 25 to 45 (LNLQVFVMIAAIIAIMLFFTW) traverse the membrane as a helical segment. Residues 46–64 (TTDGAYLSARNVSNLLRQT) are Cytoplasmic-facing. Residues 65–85 (AITGILAVGMVFVIISAEIDL) traverse the membrane as a helical segment. At 86 to 102 (SVGSMMGLLGGVAAICD) the chain is on the periplasmic side. The chain crosses the membrane as a helical span at residues 103-123 (VWLGWPLPLTIIVTLVLGLLL). Residues 124–135 (GAWNGWWVAYRK) are Cytoplasmic-facing. A helical transmembrane segment spans residues 136–156 (VPSFIVTLAGMLAFRGILIGI). The Periplasmic portion of the chain corresponds to 157-175 (TNGTTVSPTSAAMSQIGQS). Residues 176 to 196 (YLPASTGFIIGALGLMAFVGW) traverse the membrane as a helical segment. Over 197–214 (QWRGRMRRQALGLQSPAS) the chain is Cytoplasmic. The helical transmembrane segment at 215 to 235 (TAVVGRQALTAIIVLGAIWLL) threads the bilayer. The Periplasmic portion of the chain corresponds to 236–239 (NDYR). The helical transmembrane segment at 240–260 (GVPTPVLLLTLLLLGGMFMAT) threads the bilayer. Topologically, residues 261–287 (RTAFGRRIYAIGGNLEAARLSGINVER) are cytoplasmic. A helical membrane pass occupies residues 288–308 (TKLAVFAINGLMVAIAGLILS). Over 309–312 (SRLG) the chain is Periplasmic. The chain crosses the membrane as a helical span at residues 313 to 333 (AGSPSAGNIAELDAIAACVIG). The Cytoplasmic portion of the chain corresponds to 334-336 (GTS). Residues 337–357 (LAGGVGSVAGAVMGAFIMASL) form a helical membrane-spanning segment. Residues 358 to 365 (DNGMSMMD) are Periplasmic-facing. Residues 366-386 (VPTFWQYIVKGAILLLAVWMD) form a helical membrane-spanning segment. The Cytoplasmic segment spans residues 387-393 (SATKRRS).

The protein belongs to the binding-protein-dependent transport system permease family. AraH/RbsC subfamily.

The protein localises to the cell inner membrane. In terms of biological role, part of the binding-protein-dependent transport system for D-xylose. Probably responsible for the translocation of the substrate across the membrane. The polypeptide is Xylose transport system permease protein XylH (xylH) (Escherichia coli O6:H1 (strain CFT073 / ATCC 700928 / UPEC)).